Reading from the N-terminus, the 104-residue chain is Nucleoid-associated protein PEPE_1483 (104 aa).

The segment at 1 to 35 (MRGGMGNMQSMMRQMQKMQKKVTEEQEKLNQTEFT) is disordered. Over residues 8–17 (MQSMMRQMQK) the composition is skewed to low complexity. Residues 21 to 30 (KVTEEQEKLN) are compositionally biased toward basic and acidic residues.

The protein belongs to the YbaB/EbfC family. In terms of assembly, homodimer.

It is found in the cytoplasm. It localises to the nucleoid. Functionally, binds to DNA and alters its conformation. May be involved in regulation of gene expression, nucleoid organization and DNA protection. The chain is Nucleoid-associated protein PEPE_1483 from Pediococcus pentosaceus (strain ATCC 25745 / CCUG 21536 / LMG 10740 / 183-1w).